Reading from the N-terminus, the 114-residue chain is Fluoride-specific ion channel FluC 2 (114 aa).

Helical transmembrane passes span 30-50, 57-77, and 88-108; these read FPVATFLVNVAGCLILGLLSG, TFALLGTGFCGGLTTYSTFAV, and ALPSVVYVVASVAAGLAAAWL. G67 and T70 together coordinate Na(+).

Belongs to the fluoride channel Fluc/FEX (TC 1.A.43) family.

Its subcellular location is the cell membrane. It carries out the reaction fluoride(in) = fluoride(out). Na(+) is not transported, but it plays an essential structural role and its presence is essential for fluoride channel function. Functionally, fluoride-specific ion channel. Important for reducing fluoride concentration in the cell, thus reducing its toxicity. The protein is Fluoride-specific ion channel FluC 2 of Rhodococcus jostii (strain RHA1).